Here is a 429-residue protein sequence, read N- to C-terminus: Ribosomal RNA small subunit methyltransferase B (429 aa).

S-adenosyl-L-methionine-binding positions include 254–260 (CAAPGGK), D277, D303, and D322. C375 functions as the Nucleophile in the catalytic mechanism. The disordered stretch occupies residues 397 to 419 (ALSETGTPDQPGQQNLPGGEEGD). Positions 400–412 (ETGTPDQPGQQNL) are enriched in polar residues.

Belongs to the class I-like SAM-binding methyltransferase superfamily. RsmB/NOP family.

It is found in the cytoplasm. The enzyme catalyses cytidine(967) in 16S rRNA + S-adenosyl-L-methionine = 5-methylcytidine(967) in 16S rRNA + S-adenosyl-L-homocysteine + H(+). Its function is as follows. Specifically methylates the cytosine at position 967 (m5C967) of 16S rRNA. The polypeptide is Ribosomal RNA small subunit methyltransferase B (Salmonella heidelberg (strain SL476)).